Consider the following 642-residue polypeptide: tRNA uridine 5-carboxymethylaminomethyl modification enzyme MnmG (642 aa).

24 to 29 (GGGHAG) provides a ligand contact to FAD. NAD(+) is bound at residue 284–298 (GPRYCPSIEDKIHRF).

Belongs to the MnmG family. Homodimer. Heterotetramer of two MnmE and two MnmG subunits. Requires FAD as cofactor.

The protein localises to the cytoplasm. Its function is as follows. NAD-binding protein involved in the addition of a carboxymethylaminomethyl (cmnm) group at the wobble position (U34) of certain tRNAs, forming tRNA-cmnm(5)s(2)U34. In Psychrobacter sp. (strain PRwf-1), this protein is tRNA uridine 5-carboxymethylaminomethyl modification enzyme MnmG.